Consider the following 323-residue polypeptide: Pantothenate kinase (323 aa).

Residue 101–108 participates in ATP binding; sequence GSVAVGKS.

This sequence belongs to the prokaryotic pantothenate kinase family.

It is found in the cytoplasm. It carries out the reaction (R)-pantothenate + ATP = (R)-4'-phosphopantothenate + ADP + H(+). It participates in cofactor biosynthesis; coenzyme A biosynthesis; CoA from (R)-pantothenate: step 1/5. The polypeptide is Pantothenate kinase (Xanthobacter autotrophicus (strain ATCC BAA-1158 / Py2)).